The following is a 451-amino-acid chain: CDP-diacylglycerol--serine O-phosphatidyltransferase PssA (451 aa).

PLD phosphodiesterase domains are found at residues 27 to 224 (VDFF…ELRD) and 239 to 451 (SVTP…SRIL). A CDP-1,2-diacyl-sn-glycerol contacts are provided by Leu56, Tyr57, Arg91, Arg94, Arg96, Ile97, Glu132, Ala133, Val136, His138, Lys140, Gly152, Tyr159, and Arg167. His138 is a catalytic residue. Asp169 is a catalytic residue. A CDP-1,2-diacyl-sn-glycerol contacts are provided by Tyr273, Asp305, Phe306, Ile316, Ile317, Leu320, Leu323, and Tyr324. Residue His357 is part of the active site. The a CDP-1,2-diacyl-sn-glycerol site is built by Lys359, Asn374, and Arg378. Residue Glu385 is part of the active site. Residues Leu438, Ile447, Ile450, and Leu451 each coordinate a CDP-1,2-diacyl-sn-glycerol.

The protein belongs to the CDP-alcohol phosphatidyltransferase class-II family. Multimeric. Interacts with ACP, YbgC and PlsB, forming altogether a complex at the inner membrane. Monomeric and dimeric; existing in equilibrium, but the monomer probably exhibits preferential membrane association.

The protein localises to the cytoplasm. It is found in the cell inner membrane. The catalysed reaction is a CDP-1,2-diacyl-sn-glycerol + L-serine = a 1,2-diacyl-sn-glycero-3-phospho-L-serine + CMP + H(+). The protein operates within phospholipid metabolism; phosphatidylethanolamine biosynthesis; phosphatidylethanolamine from CDP-diacylglycerol: step 1/2. Catalyzes the conversion of cytidine diphosphate diacylglycerol (CDP-DG) and L-serine into phosphatidylserine. Essential for biosynthesis of phosphatidylethanolamine, one of the major membrane phospholipids. Phosphatidylserine is later converted into phosphatidylethanolamine via the action of phosphatidylserine decarboxylase psd. Associates with the bacterial membrane for its role, which depends on the levels of anionic phospholipids in the membrane. This Escherichia coli (strain K12) protein is CDP-diacylglycerol--serine O-phosphatidyltransferase PssA (pssA).